Consider the following 30-residue polypeptide: Dermaseptin-J10 (30 aa).

In terms of tissue distribution, expressed by the skin glands.

The protein resides in the secreted. Functionally, has antimicrobial activity. The chain is Dermaseptin-J10 from Phasmahyla jandaia (Jandaia leaf frog).